Reading from the N-terminus, the 745-residue chain is Elongation factor G, mitochondrial (745 aa).

Residues 40–317 (ERIRNIGISA…AVLDYLPNPG (278 aa)) enclose the tr-type G domain. GTP-binding positions include 49-56 (AHIDSGKT), 116-120 (DTPGH), and 170-173 (NKLD).

It belongs to the TRAFAC class translation factor GTPase superfamily. Classic translation factor GTPase family. EF-G/EF-2 subfamily.

The protein localises to the mitochondrion. Its pathway is protein biosynthesis; polypeptide chain elongation. Mitochondrial GTPase that catalyzes the GTP-dependent ribosomal translocation step during translation elongation. During this step, the ribosome changes from the pre-translocational (PRE) to the post-translocational (POST) state as the newly formed A-site-bound peptidyl-tRNA and P-site-bound deacylated tRNA move to the P and E sites, respectively. Catalyzes the coordinated movement of the two tRNA molecules, the mRNA and conformational changes in the ribosome. Essential during development as it acts as a retrograde signal from mitochondria to the nucleus to slow down cell proliferation if mitochondrial energy output is low. The polypeptide is Elongation factor G, mitochondrial (Drosophila erecta (Fruit fly)).